The primary structure comprises 112 residues: Putative galactitol utilization operon repressor (112 aa).

The 56-residue stretch at 5-60 (SFERRNKIIQLVNEQGTVLVQDLAGVFAASEATIRADLRFLEQKGVVTRFHGGAAK) folds into the HTH deoR-type domain. The H-T-H motif DNA-binding region spans 22-41 (VLVQDLAGVFAASEATIRAD).

In terms of biological role, repressor of the gat operon for galacticol transport and metabolism. In K12 strains the operon is constitutively expressed because this gene is inactive. This Escherichia coli (strain K12) protein is Putative galactitol utilization operon repressor (gatR).